The primary structure comprises 481 residues: Protein nucleotidyltransferase YdiU (481 aa).

ATP is bound by residues Gly85, Gly87, Arg88, Lys108, Asp120, Gly121, Arg172, and Arg179. The Proton acceptor role is filled by Asp248. Residues Asn249 and Asp258 each coordinate Mg(2+). ATP is bound at residue Asp258.

Belongs to the SELO family. Mg(2+) is required as a cofactor. The cofactor is Mn(2+).

The catalysed reaction is L-seryl-[protein] + ATP = 3-O-(5'-adenylyl)-L-seryl-[protein] + diphosphate. The enzyme catalyses L-threonyl-[protein] + ATP = 3-O-(5'-adenylyl)-L-threonyl-[protein] + diphosphate. It carries out the reaction L-tyrosyl-[protein] + ATP = O-(5'-adenylyl)-L-tyrosyl-[protein] + diphosphate. It catalyses the reaction L-histidyl-[protein] + UTP = N(tele)-(5'-uridylyl)-L-histidyl-[protein] + diphosphate. The catalysed reaction is L-seryl-[protein] + UTP = O-(5'-uridylyl)-L-seryl-[protein] + diphosphate. The enzyme catalyses L-tyrosyl-[protein] + UTP = O-(5'-uridylyl)-L-tyrosyl-[protein] + diphosphate. Its function is as follows. Nucleotidyltransferase involved in the post-translational modification of proteins. It can catalyze the addition of adenosine monophosphate (AMP) or uridine monophosphate (UMP) to a protein, resulting in modifications known as AMPylation and UMPylation. This is Protein nucleotidyltransferase YdiU from Cereibacter sphaeroides (strain ATCC 17025 / ATH 2.4.3) (Rhodobacter sphaeroides).